Consider the following 148-residue polypeptide: UPF0178 protein CA_C2825 (148 aa).

Belongs to the UPF0178 family.

In Clostridium acetobutylicum (strain ATCC 824 / DSM 792 / JCM 1419 / IAM 19013 / LMG 5710 / NBRC 13948 / NRRL B-527 / VKM B-1787 / 2291 / W), this protein is UPF0178 protein CA_C2825.